A 342-amino-acid polypeptide reads, in one-letter code: Glutamyl endopeptidase (342 aa).

The first 29 residues, 1–29 (MKGKFLKVSSLFVATLTTATLVSSPAANA), serve as a signal peptide directing secretion. The propeptide occupies 30 to 68 (LSSKAMDNHPQQTQSSKQQTPKIKKGGNLKPLEQREHAN). Residues 33–63 (KAMDNHPQQTQSSKQQTPKIKKGGNLKPLEQ) are disordered. The span at 39–50 (PQQTQSSKQQTP) shows a compositional bias: low complexity. Catalysis depends on charge relay system residues H119, D161, and S237. Residues 283–342 (FANDDQPNNPDNPDNPNNPDNPNNPDNPNNPDEPNNPDNPNNPDNPDNGDNNNSDNPDAA) form a disordered region. The segment covering 286 to 342 (DDQPNNPDNPDNPNNPDNPNNPDNPNNPDEPNNPDNPNNPDNPDNGDNNNSDNPDAA) has biased composition (low complexity). 13 tandem repeats follow at residues 289–291 (PNN), 292–294 (PDN), 295–297 (PDN), 298–300 (PNN), 301–303 (PDN), 304–306 (PNN), 307–309 (PDN), 310–312 (PNN), 316–318 (PNN), 319–321 (PDN), 322–324 (PNN), 325–327 (PDN), and 328–330 (PDN). The segment at 289-330 (PNNPDNPDNPNNPDNPNNPDNPNNPDEPNNPDNPNNPDNPDN) is 13 X 3 AA repeats of P-[DN]-N.

This sequence belongs to the peptidase S1B family. Post-translationally, proteolytically cleaved by aureolysin (aur). This cleavage leads to the activation of SspA.

Its subcellular location is the secreted. The catalysed reaction is Preferential cleavage: Glu-|-Xaa, Asp-|-Xaa.. Preferentially cleaves peptide bonds on the carboxyl-terminal side of aspartate and glutamate. Along with other extracellular proteases it is involved in colonization and infection of human tissues. Required for proteolytic maturation of thiol protease SspB and inactivation of SspC, an inhibitor of SspB. It is the most important protease for degradation of fibronectin-binding protein (FnBP) and surface protein A, which are involved in adherence to host cells. May also protect bacteria against host defense mechanism by cleaving the immunoglobulin classes IgG, IgA and IgM. May be involved in the stability of secreted lipases. In Staphylococcus aureus (strain Mu50 / ATCC 700699), this protein is Glutamyl endopeptidase (sspA).